The following is a 1224-amino-acid chain: Integrin alpha pat-2 (1224 aa).

The first 27 residues, Met-1–Ser-27, serve as a signal peptide directing secretion. Over Phe-28–Trp-1153 the chain is Extracellular. 7 FG-GAP repeats span residues Asn-29–Glu-96, Asn-110–Glu-173, Glu-180–Pro-235, Asn-236–Asn-292, Leu-293–Tyr-347, Gly-364–Glu-423, and Gln-427–Ala-490. Residues Asn-74, Asn-110, Asn-230, and Asn-292 are each glycosylated (N-linked (GlcNAc...) asparagine). Asn-610 carries N-linked (GlcNAc...) asparagine glycosylation. The short motif at Arg-622–Asp-624 is the Cell attachment site element. Asn-681, Asn-775, and Asn-819 each carry an N-linked (GlcNAc...) asparagine glycan. Disordered stretches follow at residues Leu-898–Gly-968 and Asp-981–Phe-1037. Over residues Arg-920–Thr-931 the composition is skewed to acidic residues. A compositionally biased stretch (basic and acidic residues) spans Val-955–Arg-964. The segment covering Tyr-984–Phe-1003 has biased composition (acidic residues). Residues Ser-1008 to Glu-1023 show a composition bias toward basic residues. Over residues Gly-1024–Phe-1037 the composition is skewed to basic and acidic residues. The chain crosses the membrane as a helical span at residues Trp-1154–Leu-1174. Topologically, residues Trp-1175–Leu-1224 are cytoplasmic. Positions Ala-1190–Leu-1224 are disordered. The segment covering Asp-1204–Leu-1224 has biased composition (polar residues).

This sequence belongs to the integrin alpha chain family. As to quaternary structure, heterodimer of an alpha and a beta subunit. Alpha pat-2 associates with beta pat-3.

It is found in the membrane. In terms of biological role, required for muscle development probably through the regulation of the actin-myosin cytoskeleton. During the formation of neuromuscular junctions at the larval stage, negatively regulates membrane protrusion from body wall muscles, probably through lamins such as epi-1, lam-2 and unc-52. Required for distal tip cell migration and dorsal pathfinding. Required for egg-laying. May play a role in cell motility and cell-cell interactions. The sequence is that of Integrin alpha pat-2 from Caenorhabditis briggsae.